The primary structure comprises 382 residues: MSVLLIEAFYGGSHKQLMDLLQEELKEECVLCTLPAKKWHWKARTAALYFMQTVPASANYRILFASSVLNLAELAALRPDLGKLKKVLYFHENQLAYPVQKCKERDFQCGYNQVLSCLVADTVVFNSAFNMESFLTSIGKFMKLIPDHRPKDLEKIIRPKCQVLYFPVRFPDVSRFMPEHKLAHLENVIGVKRNGDFYQREGLPGQQKSRALGGLMKNSNACRESGLCETQPGLCTTQHEGLHSPLTAAGRLNKSEASESTNPCQEEDKQHVTFNLCNIWSGMDYLQRPLHVVWPHRWEHDKDPETFFKVLLKLKEQELPFHVSVLGETFTDVPGWKRCIVAVTRCVPRPWCTRRSSQLNICILHLNSFLKGFRISARDQIL.

This sequence belongs to the glycosyltransferase group 1 family. Glycosyltransferase 4 subfamily.

Its subcellular location is the cytoplasm. It localises to the nucleus. The catalysed reaction is queuosine(34) in tRNA(Asp) + GDP-alpha-D-mannose = O-4''-alpha-D-mannosylqueuosine(34) in tRNA(Asp) + GDP + H(+). Functionally, glycosyltransferase that specifically catalyzes mannosylation of cytoplasmic tRNA(Asp) modified with queuosine at position 34 (queuosine(34)). Mannosylates the cyclopentene moiety of queuosine(34) in tRNA(Asp) to form mannosyl-queuosine(34). Mannosylation of queuosine(34) in tRNA(Asp) is required to slow-down elongation at cognate codons, GAC and GAU, thereby regulating protein translation. In Gallus gallus (Chicken), this protein is tRNA-queuosine alpha-mannosyltransferase (GTDC1).